The chain runs to 448 residues: MATILQHLPVGQKVGIAFSGGLDTSAALRWMKNKGALPYAYTANLGQPDEADYDEIPRKAMEYGAEKARLIDCRTQLAHEGIAAIQAGAFHISTGGITYFNTTPLGRAVTGTMLVAAMKEDDVHIWGDGSTFKGNDIERFYRYGLLTNPALKIYKPWLDQKFIDELGGRAEMSAFMTKEGFGYKMSAEKAYSTDSNMLGATHEAKDLEFLSSGIRIVNPIMGVAFWKPEVDVPAEEVSVTFDEGQPVAVNGKEIADPVELFLELNRIGGRHGLGMSDQIENRIIEAKSRGIYEAPGMALLHIAYERLVTGIHNEDTIEQYRLNGLKLGRLLYQGRWFDPQAIMLRETAQRWVARAVTGTVTLELRRGNDYSILNTESPNLTYAPERLSMEKVEDAPFSPLDRIGQLTMRNLDISDTRGKLGVYARAGLLSLGGNAALAQLEDGGAKKK.

ATP-binding positions include 17 to 25 (AFSGGLDTS) and A43. An L-citrulline-binding site is contributed by Y99. Positions 129 and 131 each coordinate ATP. L-aspartate-binding residues include T131, N135, and D136. N135 is a binding site for L-citrulline. D136 is an ATP binding site. R139 and S192 together coordinate L-citrulline. D194 lines the ATP pocket. Residues T201, E203, and E280 each contribute to the L-citrulline site.

The protein belongs to the argininosuccinate synthase family. Type 2 subfamily. In terms of assembly, homotetramer.

It localises to the cytoplasm. The enzyme catalyses L-citrulline + L-aspartate + ATP = 2-(N(omega)-L-arginino)succinate + AMP + diphosphate + H(+). It functions in the pathway amino-acid biosynthesis; L-arginine biosynthesis; L-arginine from L-ornithine and carbamoyl phosphate: step 2/3. The sequence is that of Argininosuccinate synthase from Acidovorax ebreus (strain TPSY) (Diaphorobacter sp. (strain TPSY)).